We begin with the raw amino-acid sequence, 313 residues long: Small glutamine-rich tetratricopeptide repeat-containing protein alpha (313 aa).

The segment at 66–100 (ATGKEMPQDLRSPARTPPSEEDSAEAERLKTEGNE) is disordered. Residue serine 77 is modified to Phosphoserine. Residue threonine 81 is modified to Phosphothreonine. Serine 84 bears the Phosphoserine mark. Residues 90 to 100 (EAERLKTEGNE) are compositionally biased toward basic and acidic residues. 3 TPR repeats span residues 91-124 (AERL…NPAN), 125-158 (AVYF…DPAY), and 159-192 (SKAY…DPDN). Lysine 137 is modified (N6-acetyllysine). Residues 250–269 (MISGGNNPLGTPGTSPSQND) are disordered. A Phosphoserine modification is found at serine 301. Threonine 303 carries the phosphothreonine modification. Position 305 is a phosphoserine (serine 305).

It belongs to the SGT family. In terms of assembly, homodimer. Homooligomer. Interacts with DNAJC5 and DNAJC5B. Interacts (via TPR repeats) with HSP90AA1. Interacts (via Gln-rich region) with SLC2A1. Interacts with HSP90AB1. Interacts (via TPR repeats) with HSPA8/Hsc70; the interaction is direct. Interacts with BAG6 (via ubiquitin-like domain); interaction prevents interaction between BAG6 and RNF126. Forms a multiprotein complex, at least composed of DNAJB12, DNAJB14, HSPA8/Hsc70 and SGTA; interaction with DNAJB14 and HSPA8/Hsc70 is direct. As to quaternary structure, (Microbial infection) Interacts with Vpu and Gag from HIV-1. (Microbial infection) Interacts with SARS-CoV accessory protein 7a. In terms of tissue distribution, ubiquitous.

Its subcellular location is the cytoplasm. It localises to the nucleus. In terms of biological role, co-chaperone that binds misfolded and hydrophobic patches-containing client proteins in the cytosol. Mediates their targeting to the endoplasmic reticulum but also regulates their sorting to the proteasome when targeting fails. Functions in tail-anchored/type II transmembrane proteins membrane insertion constituting with ASNA1 and the BAG6 complex a targeting module. Functions upstream of the BAG6 complex and ASNA1, binding more rapidly the transmembrane domain of newly synthesized proteins. It is also involved in the regulation of the endoplasmic reticulum-associated misfolded protein catabolic process via its interaction with BAG6: collaborates with the BAG6 complex to maintain hydrophobic substrates in non-ubiquitinated states. Competes with RNF126 for interaction with BAG6, preventing the ubiquitination of client proteins associated with the BAG6 complex. Binds directly to HSC70 and HSP70 and regulates their ATPase activity. (Microbial infection) In case of infection by polyomavirus, involved in the virus endoplasmic reticulum membrane penetration and infection via interaction with DNAJB12, DNAJB14 and HSPA8/Hsc70. In Homo sapiens (Human), this protein is Small glutamine-rich tetratricopeptide repeat-containing protein alpha (SGTA).